Consider the following 104-residue polypeptide: N(4)-acetylcytidine amidohydrolase (104 aa).

Residues 6 to 102 form the ASCH domain; that stretch reads TFYTRFQQDI…ELYVIAFKKV (97 aa). K20 serves as the catalytic Proton acceptor. Catalysis depends on T23, which acts as the Nucleophile. E73 serves as the catalytic Proton donor.

The protein belongs to the N(4)-acetylcytidine amidohydrolase family.

The enzyme catalyses N(4)-acetylcytidine + H2O = cytidine + acetate + H(+). It catalyses the reaction N(4)-acetyl-2'-deoxycytidine + H2O = 2'-deoxycytidine + acetate + H(+). It carries out the reaction N(4)-acetylcytosine + H2O = cytosine + acetate + H(+). Functionally, catalyzes the hydrolysis of N(4)-acetylcytidine (ac4C). This Cronobacter sakazakii (strain ATCC BAA-894) (Enterobacter sakazakii) protein is N(4)-acetylcytidine amidohydrolase.